A 134-amino-acid polypeptide reads, in one-letter code: Small ribosomal subunit protein uS11 (134 aa).

2 disordered regions span residues 1 to 22 (MPPKGRQGAAKKVRRKEKKNVA) and 114 to 134 (SIQDVTPTPHNGCRPPKRRRV). Over residues 9 to 22 (AAKKVRRKEKKNVA) the composition is skewed to basic residues.

The protein belongs to the universal ribosomal protein uS11 family. Part of the 30S ribosomal subunit. Interacts with proteins S7 and S18. Binds to IF-3.

In terms of biological role, located on the platform of the 30S subunit, it bridges several disparate RNA helices of the 16S rRNA. Forms part of the Shine-Dalgarno cleft in the 70S ribosome. In Streptomyces coelicolor (strain ATCC BAA-471 / A3(2) / M145), this protein is Small ribosomal subunit protein uS11.